The following is a 154-amino-acid chain: MNIDTLIIAVAGLFAVASSIGVLLTKDNFYAALYMSVTMLFVAAIYAAFNIQPVVVIIALIFVGAVGIVTVAIAATYRAGVSRKVNIFWVVPVIVVFAILALAYASMAVESIEVVNPEVFSAVATDYFFVVAFLFTLVVLMMLSAIKLARRVDL.

A run of 5 helical transmembrane segments spans residues Thr-5–Leu-24, Phe-29–Ala-48, Pro-53–Ala-75, Ile-87–Val-109, and Ala-124–Ile-146.

The protein localises to the cell membrane. This is an uncharacterized protein from Archaeoglobus fulgidus (strain ATCC 49558 / DSM 4304 / JCM 9628 / NBRC 100126 / VC-16).